A 270-amino-acid polypeptide reads, in one-letter code: Alpha N-terminal protein methyltransferase 1 (270 aa).

Residues G114, R119, 137–139 (EQN), 165–166 (LQ), and Q180 each bind S-adenosyl-L-methionine.

It belongs to the methyltransferase superfamily. NTM1 family.

It catalyses the reaction N-terminal L-alanyl-L-prolyl-L-lysyl-[protein] + 3 S-adenosyl-L-methionine = N-terminal N,N,N-trimethyl-L-alanyl-L-prolyl-L-lysyl-[protein] + 3 S-adenosyl-L-homocysteine + 3 H(+). It carries out the reaction N-terminal L-seryl-L-prolyl-L-lysyl-[protein] + 3 S-adenosyl-L-methionine = N-terminal N,N,N-trimethyl-L-seryl-L-prolyl-L-lysyl-[protein] + 3 S-adenosyl-L-homocysteine + 3 H(+). The enzyme catalyses N-terminal L-prolyl-L-prolyl-L-lysyl-[protein] + 2 S-adenosyl-L-methionine = N-terminal N,N-dimethyl-L-prolyl-L-prolyl-L-lysyl-[protein] + 2 S-adenosyl-L-homocysteine + 2 H(+). Alpha-N-methyltransferase that methylates the N-terminus of target proteins containing the N-terminal motif [Ala/Pro/Ser]-Pro-Lys when the initiator Met is cleaved. Specifically catalyzes mono-, di- or tri-methylation of exposed alpha-amino group of Ala or Ser residue in the [Ala/Ser]-Pro-Lys motif and mono- or di-methylation of Pro in the Pro-Pro-Lys motif. The chain is Alpha N-terminal protein methyltransferase 1 from Dictyostelium discoideum (Social amoeba).